The primary structure comprises 473 residues: Glutamate--tRNA ligase (473 aa).

The 'HIGH' region motif lies at 9–19; sequence PSPTGYLHVGG. Residues cysteine 98, cysteine 100, cysteine 125, and aspartate 127 each coordinate Zn(2+). Positions 237–241 match the 'KMSKS' region motif; the sequence is KLSKR. Lysine 240 is a binding site for ATP.

Belongs to the class-I aminoacyl-tRNA synthetase family. Glutamate--tRNA ligase type 1 subfamily. Monomer. The cofactor is Zn(2+).

The protein localises to the cytoplasm. It catalyses the reaction tRNA(Glu) + L-glutamate + ATP = L-glutamyl-tRNA(Glu) + AMP + diphosphate. Catalyzes the attachment of glutamate to tRNA(Glu) in a two-step reaction: glutamate is first activated by ATP to form Glu-AMP and then transferred to the acceptor end of tRNA(Glu). This chain is Glutamate--tRNA ligase, found in Sodalis glossinidius (strain morsitans).